The primary structure comprises 478 residues: RNA exonuclease 3 (478 aa).

The 146-residue stretch at 320–465 (VLALDCEMAF…EDAIAAMDVI (146 aa)) folds into the Exonuclease domain.

This sequence belongs to the REXO1/REXO3 family.

Its subcellular location is the cytoplasm. It localises to the nucleus. In terms of biological role, 3' to 5' exoribonuclease required for proper 3' end maturation of MRP RNA and of the U5L snRNA. The chain is RNA exonuclease 3 (REX3) from Kluyveromyces lactis (strain ATCC 8585 / CBS 2359 / DSM 70799 / NBRC 1267 / NRRL Y-1140 / WM37) (Yeast).